Consider the following 187-residue polypeptide: Elongation factor P (187 aa).

This sequence belongs to the elongation factor P family.

Its subcellular location is the cytoplasm. It participates in protein biosynthesis; polypeptide chain elongation. Its function is as follows. Involved in peptide bond synthesis. Stimulates efficient translation and peptide-bond synthesis on native or reconstituted 70S ribosomes in vitro. Probably functions indirectly by altering the affinity of the ribosome for aminoacyl-tRNA, thus increasing their reactivity as acceptors for peptidyl transferase. This chain is Elongation factor P, found in Helicobacter acinonychis (strain Sheeba).